The following is a 413-amino-acid chain: Serine hydroxymethyltransferase (413 aa).

Residues L119 and 123-125 (GHL) contribute to the (6S)-5,6,7,8-tetrahydrofolate site. N6-(pyridoxal phosphate)lysine is present on K228.

The protein belongs to the SHMT family. Homodimer. Requires pyridoxal 5'-phosphate as cofactor.

The protein localises to the cytoplasm. The enzyme catalyses (6R)-5,10-methylene-5,6,7,8-tetrahydrofolate + glycine + H2O = (6S)-5,6,7,8-tetrahydrofolate + L-serine. It functions in the pathway one-carbon metabolism; tetrahydrofolate interconversion. Its pathway is amino-acid biosynthesis; glycine biosynthesis; glycine from L-serine: step 1/1. Its function is as follows. Catalyzes the reversible interconversion of serine and glycine with tetrahydrofolate (THF) serving as the one-carbon carrier. This reaction serves as the major source of one-carbon groups required for the biosynthesis of purines, thymidylate, methionine, and other important biomolecules. Also exhibits THF-independent aldolase activity toward beta-hydroxyamino acids, producing glycine and aldehydes, via a retro-aldol mechanism. The chain is Serine hydroxymethyltransferase from Caldanaerobacter subterraneus subsp. tengcongensis (strain DSM 15242 / JCM 11007 / NBRC 100824 / MB4) (Thermoanaerobacter tengcongensis).